The following is a 504-amino-acid chain: Sodium-coupled neutral amino acid symporter 2 (504 aa).

The tract at residues 1–28 (MNKAPAQMSRFNIAPDMDSSSTNSNEYT) is disordered. Residues 1 to 79 (MNKAPAQMSR…SPGSASFGMS (79 aa)) are Cytoplasmic-facing. The tract at residues 1-99 (MNKAPAQMSR…SGILGLSYAM (99 aa)) is regulates protein turnover upon amino acid deprivation. Residues 19–28 (SSSTNSNEYT) are compositionally biased toward low complexity. The helical transmembrane segment at 80 to 99 (VFNLGNAIMGSGILGLSYAM) threads the bilayer. Residue Asn85 coordinates Na(+). The Extracellular segment spans residues 100–105 (ANTGIA). A helical membrane pass occupies residues 106-126 (MFVILLVAVAIFSLYSVHLLL). Residues 127 to 161 (KTANEGGSLVYEQLGYKAFGIPGKLAASCSITMQN) are Cytoplasmic-facing. The chain crosses the membrane as a helical span at residues 162–180 (FGAMASYLYIVKYELPIVI). The Extracellular segment spans residues 181–189 (RAFLDSNDN). A helical membrane pass occupies residues 190–210 (AWYTNGDYLVLIVTMSIILPL). Topologically, residues 211–218 (SLLKNLGY) are cytoplasmic. A helical membrane pass occupies residues 219–239 (LGYTSGFSLLCMVFFLIVVIY). Residues 240–285 (KKFQIPCPLPENFINITVNVSQPPQTNNSTDEECCKPKYFIFNSQT) lie on the Extracellular side of the membrane. Cys246 and Cys274 are joined by a disulfide. 2 N-linked (GlcNAc...) asparagine glycosylation sites follow: Asn254 and Asn258. The chain crosses the membrane as a helical span at residues 286 to 306 (VYAVPILTFAFVCHPAILPMY). The Cytoplasmic segment spans residues 307–322 (EELKDRSRRKMQNVAN). A helical transmembrane segment spans residues 323–343 (VSFLGMFIMYLLAALFGYLTF). The Extracellular segment spans residues 344–364 (NEAVEPELLHTYSKVYNFDVV). A helical transmembrane segment spans residues 365-385 (LLIVRLAVLTAVTLTVPVVLF). Thr379 is a Na(+) binding site. The Cytoplasmic segment spans residues 386-406 (PIRTSVNHLLGASKEFSWPRH). The chain crosses the membrane as a helical span at residues 407-427 (ICITVALLVCVNILVIFVPTI). Over 428 to 429 (RD) the chain is Extracellular. The helical transmembrane segment at 430–450 (IFGFIGASAAAMLIFILPSAF) threads the bilayer. Topologically, residues 451 to 465 (YIKLVKKESMKSVQK) are cytoplasmic. Residues 466-488 (IGATLFLIMGFLVMTGSMALIIM) form a helical membrane-spanning segment. The Extracellular portion of the chain corresponds to 489–504 (DWIHNALSSEEHTGGH).

It belongs to the amino acid/polyamine transporter 2 family.

It localises to the cell membrane. It catalyses the reaction L-alanine(in) + Na(+)(in) = L-alanine(out) + Na(+)(out). It carries out the reaction glycine(in) + Na(+)(in) = glycine(out) + Na(+)(out). The enzyme catalyses L-serine(in) + Na(+)(in) = L-serine(out) + Na(+)(out). The catalysed reaction is L-proline(in) + Na(+)(in) = L-proline(out) + Na(+)(out). It catalyses the reaction L-methionine(in) + Na(+)(in) = L-methionine(out) + Na(+)(out). It carries out the reaction L-histidine(in) + Na(+)(in) = L-histidine(out) + Na(+)(out). The enzyme catalyses L-asparagine(in) + Na(+)(in) = L-asparagine(out) + Na(+)(out). The catalysed reaction is L-glutamine(in) + Na(+)(in) = L-glutamine(out) + Na(+)(out). It catalyses the reaction L-threonine(in) + Na(+)(in) = L-threonine(out) + Na(+)(out). It carries out the reaction L-leucine(in) + Na(+)(in) = L-leucine(out) + Na(+)(out). The enzyme catalyses L-phenylalanine(in) + Na(+)(in) = L-phenylalanine(out) + Na(+)(out). With respect to regulation, inhibited by N-methyl-D-glucamine. Inhibited by choline. Allosteric regulation of sodium ions binding by pH. Symporter that cotransports neutral amino acids and sodium ions from the extracellular to the intracellular side of the cell membrane. The transport is pH-sensitive, Li(+)-intolerant, electrogenic, driven by the Na(+) electrochemical gradient and cotransports of neutral amino acids and sodium ions with a stoichiometry of 1:1. In Danio rerio (Zebrafish), this protein is Sodium-coupled neutral amino acid symporter 2.